A 1048-amino-acid chain; its full sequence is MALYDEDLLKNPFYLALQKWRPDLCSKVAQIHGIVLVPCRGSLPGSVQASCQFESYVLVPTEGHFQTLDGKAVVIEGNRIKLGAGFACLLSVPILFEETFYNEKEESFSILCIAHPLERRETSEEPSAPADPFSLKTIEDVREFLGRHSEKFDKNIASFHRTFRECERKSLRHHIDSVNALYTKCLQQLLRDSHLKVLAKQEAQMNLMKQAVEMYVHHDIYDLIFKYVGTMEASEDAAFNKITRSLQDLQQKDIGVKPEFSFNIPRAKRELGQLNKCTSPQQKLLCLRKVVQLMTQSPSQRVNLETMCADDLLSVLLYLLVKTEIPNWMANLSYIKNFRFSSSAKDELGYCLTSVEAAIEYIRQGSLSTKTPDAEGFGDRLFLKQRMNLLSQMTSTPIDCLFKHIASGNQKEVERLLSQDDQDKDAMQKMCHPLCSCEDCEKLISGRLNDPSVVTPFSRDDRGQTPLHVAALCGQASLIDFLVSKGAVVNATDYHGSTPLHLACQKGFQSVTLLLLHYKASTEVQDNNGNTPLHLACTYGQEDCVKALVYYDVQACRLDIGNEKGDTALHIAARWGYEGIIETLLQNGAPTAVQNRLKETPLKCALNSKILSIMEAHHLSSDRRPRPSEVPAQSPTRSVDSISQGSSTSSFSSISVSFRQEEVKKDYREVEKLLRAVADGDLEMVRYLLEWTEDDLDDVEDAISTVDLEFCHPLCQCPKCAPAQKLARISANGLSVNVTNQDGFSPLHMAALHGRTDLVPLLLKHGAYSGARNTSQAVPLHLACQQGHFQVAKCLLDSNAKPNKKDLSGNTPLICACSAGHHEVAALLLQHGASINACNNKGNTALHEAVMGRHTLVVELLLFYGASVDILNKRQYTAADCAEQDSKIMELLQVVPGCVASLDSVEEADHEGYVTVEIRRKWNPKMYNLPEEPLRRQFCLINPGGRFQERTSRETMGRDRSVPDLAGRSLQEPEKQRVTGKQSDLSDLSRYQTSEEGNKGLPERPVSRQAAPGHRPMVRRHTVNDAAILQVPEVTVHLTTHEASVPQS.

The tract at residues 1–372 (MALYDEDLLK…RQGSLSTKTP (372 aa)) is sufficient for GEF activity towards RAB21. The VPS9 domain occupies 233 to 371 (ASEDAAFNKI…IRQGSLSTKT (139 aa)). ANK repeat units follow at residues 396 to 426 (TPID…DKDA), 462 to 491 (RGQT…VVNA), 495 to 524 (HGST…STEV), 528 to 557 (NGNT…QACR), 564 to 593 (KGDT…PTAV), and 597 to 627 (LKET…RPRP). The tract at residues 396 to 460 (TPIDCLFKHI…PSVVTPFSRD (65 aa)) is sufficient for interaction with VPS29. An interaction with RAB38 region spans residues 451 to 600 (PSVVTPFSRD…TAVQNRLKET (150 aa)). Residues 451 to 729 (PSVVTPFSRD…CAPAQKLARI (279 aa)) are interaction with RAB32. Residues 618 to 627 (HLSSDRRPRP) are compositionally biased toward basic and acidic residues. The disordered stretch occupies residues 618–650 (HLSSDRRPRPSEVPAQSPTRSVDSISQGSSTSS). The span at 638–650 (SVDSISQGSSTSS) shows a compositional bias: low complexity. The required for interaction with VAMP7 stretch occupies residues 658 to 707 (FRQEEVKKDYREVEKLLRAVADGDLEMVRYLLEWTEDDLDDVEDAISTVD). ANK repeat units lie at residues 668–698 (REVE…DLDD), 742–771 (DGFS…YSGA), 775–804 (SQAV…KPNK), 808–837 (SGNT…SINA), and 841–870 (KGNT…SVDI). The interval 692–745 (TEDDLDDVEDAISTVDLEFCHPLCQCPKCAPAQKLARISANGLSVNVTNQDGFS) is sufficient for interaction with VPS29. Basic and acidic residues predominate over residues 949 to 962 (ERTSRETMGRDRSV). Positions 949-1019 (ERTSRETMGR…AAPGHRPMVR (71 aa)) are disordered. A phosphoserine mark is found at Ser-961 and Ser-969. The span at 979–995 (TGKQSDLSDLSRYQTSE) shows a compositional bias: polar residues. The segment covering 996–1006 (EGNKGLPERPV) has biased composition (basic and acidic residues). Thr-1022 is modified (phosphothreonine).

In terms of assembly, interacts with RAB21 (GDP-bound form), VPS29, KIF5A, KIF5C, GOLGA4. Interacts with RAB32 (GTP-bound form), RAB38 (GTP-bound form), VAMP7. Interacts with low affinity with RAB5. ANKRD27:RAB32 heterodimers can homodimerize to form tetramers. Can interact with RAB38 or RAB32, VPS29 and VAMP7 simultaneously. A decreased interaction with RAB32 seen in the presence of SGSM2.

The protein localises to the early endosome. The protein resides in the late endosome. It localises to the cytoplasmic vesicle membrane. Its subcellular location is the lysosome. It is found in the cell membrane. The protein localises to the melanosome. The protein resides in the cytoplasmic vesicle. May be a guanine exchange factor (GEF) for Rab21, Rab32 and Rab38 and regulate endosome dynamics. May regulate the participation of VAMP7 in membrane fusion events; in vitro inhibits VAMP7-mediated SNARE complex formation by trapping VAMP7 in a closed, fusogenically inactive conformation. Involved in peripheral melanosomal distribution of TYRP1 in melanocytes; the function, which probably is implicating vesicle-trafficking, includes cooperation with Rab32, Rab38 and VAMP7. Involved in the regulation of neurite growth; the function seems to require its GEF activity, probably towards Rab21, and VAMP7 but not Rab32/38. Proposed to be involved in Golgi sorting of VAMP7 and transport of VAMP7 vesicles to the cell surface; the function seems to implicate kinesin heavy chain isoform 5 proteins, GOLGA4, RAB21 and MACF1. Required for the colocalization of VAMP7 and Rab21, probably on TGN sites. Involved in GLUT1 endosome-to-plasma membrane trafficking; the function is dependent of association with VPS29. Regulates the proper trafficking of melanogenic enzymes TYR, TYRP1 and DCT/TYRP2 to melanosomes in melanocytes. In Mus musculus (Mouse), this protein is Ankyrin repeat domain-containing protein 27 (Ankrd27).